Consider the following 488-residue polypeptide: Prostaglandin E2 receptor EP4 subtype (488 aa).

Residues 1 to 19 (MSTPGVNSSASLSPDRLNS) lie on the Extracellular side of the membrane. A glycan (N-linked (GlcNAc...) asparagine) is linked at Asn-7. Residues 20–43 (PVTIPAVMFIFGVVGNLVAIVVLC) traverse the membrane as a helical segment. At 44 to 55 (KSRKEQKETTFY) the chain is on the cytoplasmic side. Residues 56 to 79 (TLVCGLAVTDLLGTLLVSPVTIAT) form a helical membrane-spanning segment. Residues 80–96 (YMKGQWPGGQPLCEYST) are Extracellular-facing. Cys-92 and Cys-170 are disulfide-bonded. The helical transmembrane segment at 97–115 (FILLFFSLSGLSIICAMSV) threads the bilayer. The Cytoplasmic segment spans residues 116–135 (ERYLAINHAYFYSHYVDKRL). A helical transmembrane segment spans residues 136-160 (AGLTLFAVYASNVLFCALPNMGLGS). At 161-184 (SRLQYPDTWCFIDWTTNVTAHAAY) the chain is on the extracellular side. Residues 185–211 (SYMYAGFSSFLILATVLCNVLVCGALL) form a helical membrane-spanning segment. Residues 212 to 267 (RMHRQFMRRTSLGTEQHHAAAAASVASRGHPAASPALPRLSDFRRRRSFRRIAGAE) are Cytoplasmic-facing. The helical transmembrane segment at 268-295 (IQMVILLIATSLVVLICSIPLVVRVFVN) threads the bilayer. Over 296-312 (QLYQPSLEREVSKNPDL) the chain is Extracellular. Residues 313–332 (QAIRIASVNPILDPWIYILL) traverse the membrane as a helical segment. Topologically, residues 333–488 (RKTVLSKAIE…ETLNLSEKCI (156 aa)) are cytoplasmic. The interval 356–376 (RERSGQHCSDSQRTSSAMSGH) is disordered. Polar residues predominate over residues 361 to 376 (QHCSDSQRTSSAMSGH). Phosphoserine is present on residues Ser-374, Ser-377, Ser-379, and Ser-382. Positions 437–449 (SETSDSSQGQDSE) are enriched in polar residues. The disordered stretch occupies residues 437–475 (SETSDSSQGQDSESVLLVDEAGGSGRAGPAPKGSSLQVT).

It belongs to the G-protein coupled receptor 1 family. As to quaternary structure, interacts with FEM1A. Phosphorylation mediates agonist-mediated desensitization by promoting cytoplasmic retention. As to expression, high in intestine and in peripheral blood mononuclear cells; low in lung, kidney, thymus, uterus, vasculature and brain. Not found in liver, heart, retina oe skeletal muscle.

The protein resides in the cell membrane. In terms of biological role, receptor for prostaglandin E2 (PGE2). The activity of this receptor is mediated by G(s) proteins that stimulate adenylate cyclase. Has a relaxing effect on smooth muscle. May play an important role in regulating renal hemodynamics, intestinal epithelial transport, adrenal aldosterone secretion, and uterine function. The polypeptide is Prostaglandin E2 receptor EP4 subtype (PTGER4) (Homo sapiens (Human)).